Reading from the N-terminus, the 432-residue chain is MKKGMKVSLSVAAAALLMSAPAAFAFHSGGVAECEGCHTMHNSLGGAVMNSATAQFTTGPMLLQGATQSSSCLNCHQHAGDTGPSSYHISTAEADMPAGTAPLQMTPGGDFGWVKKTYTWNVRGLNTSEGERKGHNIVAGDYNYVADTTLTTAPGGTYPANQLHCSSCHDPHGKYRRFVDGSIATTGLPIKNSGSYQNSNDPTAWGAVGAYRILGGTGYQPKSLSGSYAFANQVPAAVAPSTYNRTEATTQTRVAYGQGMSEWCANCHTDIHNSAYPTNLRHPAGNGAKFGATIAGLYNSYKKSGDLTGTQASAYLSLAPFEEGTADYTVLKGHAKIDDTALTGADATSNVNCLSCHRAHASGFDSMTRFNLAYEFTTIADASGNSIYGTDPNTSSLQGRSVNEMTAAYYGRTADKFAPYQRALCNKCHAKD.

Residues Met-1–Ala-25 form the signal peptide.

Requires heme as cofactor.

The protein resides in the cell outer membrane. The protein localises to the cell surface. Its function is as follows. Plays an important role in extracellular electron transfer. Can transfer electrons to insoluble Fe(3+) oxides as well as other extracellular electron acceptors, including Mn(4+) oxide and humic substances. Essential for direct interspecies electron transfer (DIET) in cocultures with G.metallireducens. This Geobacter sulfurreducens (strain ATCC 51573 / DSM 12127 / PCA) protein is C-type cytochrome OmcS.